The sequence spans 911 residues: Protein translocase subunit SecA (911 aa).

Residues Q86, G104–T108, and D512 contribute to the ATP site. Residues A869 to K888 are disordered. 4 residues coordinate Zn(2+): C895, C897, C906, and H907.

It belongs to the SecA family. In terms of assembly, monomer and homodimer. Part of the essential Sec protein translocation apparatus which comprises SecA, SecYEG and auxiliary proteins SecDF-YajC and YidC. Zn(2+) serves as cofactor.

Its subcellular location is the cell inner membrane. It localises to the cytoplasm. It catalyses the reaction ATP + H2O + cellular proteinSide 1 = ADP + phosphate + cellular proteinSide 2.. Part of the Sec protein translocase complex. Interacts with the SecYEG preprotein conducting channel. Has a central role in coupling the hydrolysis of ATP to the transfer of proteins into and across the cell membrane, serving both as a receptor for the preprotein-SecB complex and as an ATP-driven molecular motor driving the stepwise translocation of polypeptide chains across the membrane. The chain is Protein translocase subunit SecA from Bordetella parapertussis (strain 12822 / ATCC BAA-587 / NCTC 13253).